The following is a 475-amino-acid chain: MINNQTNKKGPQLERVHFGSTQVVGKSTKRRQRGTKLDIEYTVRRNDAPKEQKFLISEIFDEKLDKQIKHEKKQNHTFIKPKLSLVIKEEQHITKKVLRGKERAATHAFMKEMVESNKIQPSWNVEYEKEIDEVDLFFMKKKTKPFSGFSIKELRDSLIVQSDDKNMAQPTVMSSIDEIVTPREEISVSAISEQLASLMERVDKLEKMNAALEEENKQLKKEREATIKSVKKEAKKIKQEKPQIVKKTQHKSLGVNLKITKTKVVGQEQCLEIENTQHKKFVEKPSMPLKVSKKMTEHQLKKTIRTWYEFDPSKLVQHQKEVLNSVVTNTTFADKVRETGIPKQKIRYVAKPPAEEKRSIHFYGYKPKGIPNKVWWNWVTTGTAMDAYEKADRYLYHQFKREMMIYRNKWVKFSKEFNPYLSKPKMVWEENTWEYEYKTDVPYNFILKWRQLVQTYKPNTPIQADWYKISQKQQC.

A coiled-coil region spans residues 185-244 (EISVSAISEQLASLMERVDKLEKMNAALEEENKQLKKEREATIKSVKKEAKKIKQEKPQI).

This is an uncharacterized protein from Nora virus.